We begin with the raw amino-acid sequence, 64 residues long: Small ribosomal subunit protein bS21 (64 aa).

This sequence belongs to the bacterial ribosomal protein bS21 family.

This Flavobacterium johnsoniae (strain ATCC 17061 / DSM 2064 / JCM 8514 / BCRC 14874 / CCUG 350202 / NBRC 14942 / NCIMB 11054 / UW101) (Cytophaga johnsonae) protein is Small ribosomal subunit protein bS21.